A 216-amino-acid polypeptide reads, in one-letter code: Adenylate kinase (216 aa).

ATP is bound at residue 10 to 15 (GAGKGT). The NMP stretch occupies residues 30-59 (STGDMFRAAMKAETELGLQAKSFIDKGALV). AMP-binding positions include Thr-31, Arg-36, 57–59 (ALV), 85–88 (GFPR), and Gln-92. An LID region spans residues 126-163 (GRRICKECGATYHLEFNPPAKADVCDKCGGELYQRSDD). Arg-127 contributes to the ATP binding site. Residues Cys-130 and Cys-133 each coordinate Zn(2+). 136-137 (TY) provides a ligand contact to ATP. Residues Cys-150 and Cys-153 each contribute to the Zn(2+) site. AMP is bound by residues Arg-160 and Arg-171. Residue Gln-199 participates in ATP binding.

This sequence belongs to the adenylate kinase family. In terms of assembly, monomer.

The protein localises to the cytoplasm. It catalyses the reaction AMP + ATP = 2 ADP. The protein operates within purine metabolism; AMP biosynthesis via salvage pathway; AMP from ADP: step 1/1. In terms of biological role, catalyzes the reversible transfer of the terminal phosphate group between ATP and AMP. Plays an important role in cellular energy homeostasis and in adenine nucleotide metabolism. This chain is Adenylate kinase, found in Bacillus cytotoxicus (strain DSM 22905 / CIP 110041 / 391-98 / NVH 391-98).